Reading from the N-terminus, the 493-residue chain is 3-octaprenyl-4-hydroxybenzoate carboxy-lyase (493 aa).

Residue Asn-172 participates in Mn(2+) binding. Prenylated FMN contacts are provided by residues 175–177 (IYR), 189–191 (RWL), and 194–195 (RG). Position 238 (Glu-238) interacts with Mn(2+). Residue Asp-287 is the Proton donor of the active site.

It belongs to the UbiD family. As to quaternary structure, homohexamer. Requires prenylated FMN as cofactor. Mn(2+) is required as a cofactor.

It is found in the cell membrane. The enzyme catalyses a 4-hydroxy-3-(all-trans-polyprenyl)benzoate + H(+) = a 2-(all-trans-polyprenyl)phenol + CO2. The protein operates within cofactor biosynthesis; ubiquinone biosynthesis. Catalyzes the decarboxylation of 3-octaprenyl-4-hydroxy benzoate to 2-octaprenylphenol, an intermediate step in ubiquinone biosynthesis. The polypeptide is 3-octaprenyl-4-hydroxybenzoate carboxy-lyase (Shewanella loihica (strain ATCC BAA-1088 / PV-4)).